Consider the following 217-residue polypeptide: Adenylate kinase (217 aa).

10–15 (GAGKGT) is an ATP binding site. An NMP region spans residues 30 to 59 (STGDMFRAAMKEETPLGLEAKSYIDKGELV). AMP is bound by residues threonine 31, arginine 36, 57–59 (ELV), 85–88 (GFPR), and glutamine 92. Residues 126 to 163 (GRRICSVCGTTYHLVFNPPKTPGVCDKDGGDLYQRADD) form an LID region. Position 127 (arginine 127) interacts with ATP. The Zn(2+) site is built by cysteine 130 and cysteine 133. Position 136-137 (136-137 (TY)) interacts with ATP. Zn(2+) is bound by residues cysteine 150 and aspartate 153. 2 residues coordinate AMP: arginine 160 and arginine 171. Glutamine 199 provides a ligand contact to ATP.

It belongs to the adenylate kinase family. Monomer.

The protein resides in the cytoplasm. It carries out the reaction AMP + ATP = 2 ADP. It functions in the pathway purine metabolism; AMP biosynthesis via salvage pathway; AMP from ADP: step 1/1. Its function is as follows. Catalyzes the reversible transfer of the terminal phosphate group between ATP and AMP. Plays an important role in cellular energy homeostasis and in adenine nucleotide metabolism. This Bacillus velezensis (strain DSM 23117 / BGSC 10A6 / LMG 26770 / FZB42) (Bacillus amyloliquefaciens subsp. plantarum) protein is Adenylate kinase.